We begin with the raw amino-acid sequence, 210 residues long: Glutathione S-transferase P 1 (210 aa).

The region spanning 2 to 81 is the GST N-terminal domain; that stretch reads PPYTIVYFPV…HLGRSLGLYG (80 aa). At Tyr4 the chain carries Phosphotyrosine; by EGFR. Glutathione-binding positions include Tyr8, Arg14, Trp39, Lys45, and 52 to 53; that span reads QL. Thr62 bears the Phosphothreonine mark. 65 to 66 is a glutathione binding site; it reads QS. The region spanning 83–204 is the GST C-terminal domain; that stretch reads NQREAAQMDM…SSPEHVNRPI (122 aa). Lys103 and Lys116 each carry N6-succinyllysine. Lys128 carries the post-translational modification N6-acetyllysine.

In terms of assembly, homodimer. Interacts with CDK5. Ubiquitously expressed.

It localises to the cytoplasm. The protein localises to the mitochondrion. The protein resides in the nucleus. It carries out the reaction RX + glutathione = an S-substituted glutathione + a halide anion + H(+). The catalysed reaction is prostaglandin J2 + glutathione = prostaglandin J2-S-(R)-glutathione. The enzyme catalyses prostaglandin J2 + glutathione = prostaglandin J2-S-(S)-glutathione. It catalyses the reaction prostaglandin A2 + glutathione = prostaglandin A2-S-(S)-glutathione. It carries out the reaction 11(S)-hydroxy-14(S),15(S)-epoxy-(5Z,8Z,12E)-eicosatrienoate + glutathione = (11S,15S)-dihydroxy-14(R)-S-glutathionyl-(5Z,8Z,12E)-eicosatrienoate. Conjugation of reduced glutathione to a wide number of exogenous and endogenous hydrophobic electrophiles. Involved in the formation of glutathione conjugates of both prostaglandin A2 (PGA2) and prostaglandin J2 (PGJ2). Participates in the formation of novel hepoxilin regioisomers. Negatively regulates CDK5 activity via p25/p35 translocation to prevent neurodegeneration. The protein is Glutathione S-transferase P 1 of Mus musculus (Mouse).